We begin with the raw amino-acid sequence, 166 residues long: Myosin regulatory light chain 2, ventricular/cardiac muscle isoform (166 aa).

Ser-2 carries the post-translational modification N,N,N-trimethylserine. 3 positions are modified to phosphoserine: Ser-14, Ser-15, and Ser-19. 3 EF-hand domains span residues 24 to 59, 94 to 129, and 130 to 165; these read TQIQEFKEAFTIMDQNRDGFIDKNDLRDTFAALGRV, DPEETILNAFKVFDPEGKGSLKADYVREMLTTQAER, and FSKEEIDQMFAAFPPDVTGNLDYKNLVHIITHGEEK. Ca(2+) is bound by residues Asp-37, Asn-39, Asp-41, and Asp-48. Thr-52 carries the post-translational modification Phosphothreonine.

In terms of assembly, myosin is a hexamer of 2 heavy chains and 4 light chains. Interacts with MYOC. In terms of processing, N-terminus is methylated by METTL11A/NTM1. Post-translationally, phosphorylated by MYLK3 and MYLK2; promotes cardiac muscle contraction and function. Dephosphorylated by PPP1CB complexed to PPP1R12B. The phosphorylated form in adult is expressed as gradients across the heart from endocardium (low phosphorylation) to epicardium (high phosphorylation); regulates cardiac torsion and workload distribution. Abundantly expressed in both cardiac and slow skeletal muscle (soleus), with no detectable expression in fast skeletal muscle (vastus lateralis) or non-muscle tissue.

It localises to the cytoplasm. The protein localises to the myofibril. The protein resides in the sarcomere. Its subcellular location is the a band. In terms of biological role, contractile protein that plays a role in heart development and function. Following phosphorylation, plays a role in cross-bridge cycling kinetics and cardiac muscle contraction by increasing myosin lever arm stiffness and promoting myosin head diffusion; as a consequence of the increase in maximum contraction force and calcium sensitivity of contraction force. These events altogether slow down myosin kinetics and prolong duty cycle resulting in accumulated myosins being cooperatively recruited to actin binding sites to sustain thin filament activation as a means to fine-tune myofilament calcium sensitivity to force. During cardiogenesis plays an early role in cardiac contractility by promoting cardiac myofibril assembly. This is Myosin regulatory light chain 2, ventricular/cardiac muscle isoform from Rattus norvegicus (Rat).